A 704-amino-acid polypeptide reads, in one-letter code: Protein cueball (704 aa).

The signal sequence occupies residues Met1 to Ala26. Residues Thr27–Thr594 lie on the Extracellular side of the membrane. LDL-receptor class B repeat units lie at residues Gly69–Glu119, Arg120–Thr166, Arg199–Arg242, and Asn243–Tyr288. Asn152 and Asn219 each carry an N-linked (GlcNAc...) asparagine glycan. 3 EGF-like domains span residues Thr363–Glu397, Asp432–Glu478, and Glu514–Glu551. Cystine bridges form between Cys372–Cys385, Cys387–Cys396, Cys436–Cys446, Cys440–Cys465, Cys467–Cys477, Cys518–Cys528, Cys522–Cys539, and Cys541–Cys550. A glycan (N-linked (GlcNAc...) asparagine) is linked at Asn375. An N-linked (GlcNAc...) asparagine glycan is attached at Asn450. N-linked (GlcNAc...) asparagine glycosylation occurs at Asn532. Asn592 carries an N-linked (GlcNAc...) asparagine glycan. Residues Val595–Val615 form a helical membrane-spanning segment. Residues Val616–Lys704 lie on the Cytoplasmic side of the membrane.

Belongs to the cueball family.

It localises to the cell membrane. Its function is as follows. Has a role in spermatogenesis and oogenesis. The sequence is that of Protein cueball from Anopheles gambiae (African malaria mosquito).